A 487-amino-acid chain; its full sequence is 3-octaprenyl-4-hydroxybenzoate carboxy-lyase (487 aa).

Asparagine 172 provides a ligand contact to Mn(2+). Prenylated FMN is bound by residues 175–177 (IYR), 189–191 (RWL), and 194–195 (RG). Glutamate 238 lines the Mn(2+) pocket. Aspartate 287 acts as the Proton donor in catalysis.

It belongs to the UbiD family. Homohexamer. Requires prenylated FMN as cofactor. The cofactor is Mn(2+).

Its subcellular location is the cell membrane. It carries out the reaction a 4-hydroxy-3-(all-trans-polyprenyl)benzoate + H(+) = a 2-(all-trans-polyprenyl)phenol + CO2. The protein operates within cofactor biosynthesis; ubiquinone biosynthesis. In terms of biological role, catalyzes the decarboxylation of 3-octaprenyl-4-hydroxy benzoate to 2-octaprenylphenol, an intermediate step in ubiquinone biosynthesis. This is 3-octaprenyl-4-hydroxybenzoate carboxy-lyase from Actinobacillus pleuropneumoniae serotype 7 (strain AP76).